Here is a 708-residue protein sequence, read N- to C-terminus: Leukotoxin translocation ATP-binding protein LktB (708 aa).

A Peptidase C39 domain is found at 1 to 126 (MEANHQRNDL…ACYQGQLILV (126 aa)). Residues 155–437 (FLETLIVSIF…LAQLWQDFQQ (283 aa)) form the ABC transmembrane type-1 domain. The next 5 helical transmembrane spans lie at 159 to 179 (LIVS…FQVV), 192 to 212 (LNII…LSGL), 270 to 290 (ALTS…MWYY), 296 to 316 (LVIL…SPIL), and 389 to 409 (VMVI…LSIG). Residues 469–704 (ISFKNIRFRY…SNGLYSYLHQ (236 aa)) form the ABC transporter domain. 503–510 (GRSGSGKS) lines the ATP pocket.

Belongs to the ABC transporter superfamily. Protein-1 exporter (TC 3.A.1.109) family. In terms of assembly, homodimer.

It localises to the cell inner membrane. It carries out the reaction ATP + H2O + proteinSide 1 = ADP + phosphate + proteinSide 2.. Part of the ABC transporter complex LktBD involved in leukotoxin export. Transmembrane domains (TMD) form a pore in the inner membrane and the ATP-binding domain (NBD) is responsible for energy generation. This is Leukotoxin translocation ATP-binding protein LktB (lktB) from Mannheimia haemolytica (Pasteurella haemolytica).